Here is a 224-residue protein sequence, read N- to C-terminus: Ribulose-phosphate 3-epimerase (224 aa).

Ser-8 is a binding site for substrate. Positions 31, 33, and 64 each coordinate a divalent metal cation. Asp-33 functions as the Proton acceptor in the catalytic mechanism. Residues His-64, 140 to 143 (GFGG), 173 to 175 (DGG), and 195 to 196 (GS) each bind substrate. A divalent metal cation is bound at residue Asp-173. Asp-173 (proton donor) is an active-site residue.

Belongs to the ribulose-phosphate 3-epimerase family. The cofactor is a divalent metal cation.

It catalyses the reaction D-ribulose 5-phosphate = D-xylulose 5-phosphate. It participates in carbohydrate degradation. Catalyzes the reversible epimerization of D-ribulose 5-phosphate to D-xylulose 5-phosphate. This is Ribulose-phosphate 3-epimerase from Mycobacterium leprae (strain TN).